We begin with the raw amino-acid sequence, 44 residues long: uncharacterized protein (44 aa).

This is an uncharacterized protein from Methanocaldococcus jannaschii (strain ATCC 43067 / DSM 2661 / JAL-1 / JCM 10045 / NBRC 100440) (Methanococcus jannaschii).